Consider the following 214-residue polypeptide: Ras-related protein RABA5c (214 aa).

Residue 19 to 26 (GDSAVGKS) participates in GTP binding. Positions 41-49 (SKATIGVEF) match the Effector region motif. GTP-binding positions include 67–71 (DTAGQ), 125–128 (NKCD), and 155–156 (SA). 2 S-geranylgeranyl cysteine lipidation sites follow: cysteine 211 and cysteine 212.

It belongs to the small GTPase superfamily. Rab family. Interacts (via C-terminus) with GDI1. Interacts with PUX8/SAY1. In terms of tissue distribution, expressed in roots and actively dividing cells.

Its subcellular location is the golgi apparatus membrane. It localises to the golgi apparatus. It is found in the trans-Golgi network membrane. The protein resides in the cell membrane. In terms of biological role, intracellular vesicle trafficking and protein transport. Binds GTP and GDP and possesses intrinsic GTPase activity. The sequence is that of Ras-related protein RABA5c (RABA5C) from Arabidopsis thaliana (Mouse-ear cress).